We begin with the raw amino-acid sequence, 339 residues long: Methionine import ATP-binding protein MetN 1 (339 aa).

Positions 2 to 241 constitute an ABC transporter domain; that stretch reads ISFNNVSKVY…PKTKTTQNFV (240 aa). 38–45 provides a ligand contact to ATP; it reads GFSGAGKS.

This sequence belongs to the ABC transporter superfamily. Methionine importer (TC 3.A.1.24) family. The complex is composed of two ATP-binding proteins (MetN), two transmembrane proteins (MetI) and a solute-binding protein (MetQ).

It localises to the cell membrane. The catalysed reaction is L-methionine(out) + ATP + H2O = L-methionine(in) + ADP + phosphate + H(+). It catalyses the reaction D-methionine(out) + ATP + H2O = D-methionine(in) + ADP + phosphate + H(+). Part of the ABC transporter complex MetNIQ involved in methionine import. Responsible for energy coupling to the transport system. This chain is Methionine import ATP-binding protein MetN 1, found in Bacillus thuringiensis subsp. konkukian (strain 97-27).